The chain runs to 153 residues: Protein Smg homolog (153 aa).

It belongs to the Smg family.

This is Protein Smg homolog from Neisseria meningitidis serogroup B (strain ATCC BAA-335 / MC58).